Consider the following 479-residue polypeptide: HSPB1-associated protein 1 (479 aa).

The segment at 1–25 (MEAGCEGSSPQTLGERTMGEEGERV) is disordered. The interaction with HSPB1 stretch occupies residues 88–208 (ETECSYVDAT…EDTPFLYPTR (121 aa)). One can recognise a JmjC domain in the interval 124–288 (WAYADYKYFV…HLARVEEAVT (165 aa)). The tract at residues 347–412 (PRANGEEPGV…GDSQECTSRN (66 aa)) is disordered. Over residues 356-369 (VQEHMEVEQARDPS) the composition is skewed to basic and acidic residues.

Interacts with CRYAB and HSPB1. In terms of tissue distribution, widely expressed. Highly expressed by Sertoli cells in testis (at protein level).

It is found in the cytoplasm. Functionally, may play a role in cellular stress response. In Rattus norvegicus (Rat), this protein is HSPB1-associated protein 1 (Hspbap1).